Here is a 64-residue protein sequence, read N- to C-terminus: Copper-metallothionein (64 aa).

N-acetylserine is present on Ser1. Cu(+)-binding residues include Cys7, Cys11, Cys16, Cys18, Cys22, Cys24, Cys28, Cys30, Cys33, Cys36, Cys38, Cys43, Cys45, Cys49, Cys55, Cys57, Cys61, and Cys63.

This sequence belongs to the metallothionein superfamily. Type 2 family.

Its function is as follows. The metallothioneins are involved in the cellular sequestration of toxic metal ions and regulation of essential trace elements. This isoform binds exclusively copper. This Helix pomatia (Roman snail) protein is Copper-metallothionein.